A 141-amino-acid polypeptide reads, in one-letter code: Large ribosomal subunit protein uL11 (141 aa).

It belongs to the universal ribosomal protein uL11 family. In terms of assembly, part of the ribosomal stalk of the 50S ribosomal subunit. Interacts with L10 and the large rRNA to form the base of the stalk. L10 forms an elongated spine to which L12 dimers bind in a sequential fashion forming a multimeric L10(L12)X complex. One or more lysine residues are methylated.

Its function is as follows. Forms part of the ribosomal stalk which helps the ribosome interact with GTP-bound translation factors. This Streptococcus gordonii (strain Challis / ATCC 35105 / BCRC 15272 / CH1 / DL1 / V288) protein is Large ribosomal subunit protein uL11.